A 130-amino-acid chain; its full sequence is uncharacterized protein (130 aa).

Residues 1–26 form the signal peptide; that stretch reads MKFIYKLLFILSIVLFLFNNIITING. N88 carries N-linked (GlcNAc...) asparagine glycosylation.

It localises to the secreted. This is an uncharacterized protein from Dictyostelium discoideum (Social amoeba).